We begin with the raw amino-acid sequence, 225 residues long: Uracil-DNA glycosylase (225 aa).

The Proton acceptor role is filled by aspartate 65.

Belongs to the uracil-DNA glycosylase (UDG) superfamily. UNG family.

Its subcellular location is the cytoplasm. It carries out the reaction Hydrolyzes single-stranded DNA or mismatched double-stranded DNA and polynucleotides, releasing free uracil.. In terms of biological role, excises uracil residues from the DNA which can arise as a result of misincorporation of dUMP residues by DNA polymerase or due to deamination of cytosine. The protein is Uracil-DNA glycosylase of Lysinibacillus sphaericus (strain C3-41).